A 718-amino-acid polypeptide reads, in one-letter code: MLVHLFRVGIRGGPFPGRLLPPLRFQTFSAVRYSDGYRSSSLFWAVAHLRSQLWAHLPRAPLAPRWSPSAWCWVGGALLGPMVLSKHPHLCLVALCEAEEATPASSTPHVVGSRFNWKLFWQFLRPHLLVLGVAVVLALGAALVNVQIPLLLGQLVEIVAKYTRDHVGSFMTESQNLSTHLLILYGVQGLLTFGYLVLLSHVGERMAVDMRRALFSSLLRQDIAFFDANKTGQLVSRLTTDVQEFKSSFKLVISQGLRSCTQVAGCLVSLSMLSTRLTLLLMLATPALMGVGTLMGSGLRKLSRQCQEQIARAMGVADEALGNVRTVRAFAMEQREEERYGAELEACRCRAEELGRGIALSQGLSNIAFNCMVLGTLFIGGSLVAGQQLTGGDLMSFLVASQTVQRSMANLSVLFGQVVRGLSAGARVFEYMALNPCIPLSGGCCVPKEQLRGSVTFQNVCFSYPCRPGFEVLKDFTLTLPPGKIVALVGQSGGGKTTVASLLERFYDPTAGVVMLDGRDLRTLDPSWLRGQVVGFISQEPVLFGTTIMENIRFGKLEASDEEVYAAAREANAHEFITSFPEGYNTIVGERGTTLSGGQKQRLAIARALIKQPTVLILDEATSALDAESERVVQEALDRASAGRTVLVIAHRLSTVRGAHRIVVMADGRVWEAGTHEELLKKGGLYAELIRRQALDAPRTAAPLPKKPEGPRNHQHKS.

The transit peptide at 1 to 25 directs the protein to the mitochondrion; the sequence is MLVHLFRVGIRGGPFPGRLLPPLRF. The next 3 helical transmembrane spans lie at 128 to 148, 179 to 199, and 279 to 299; these read LLVL…NVQI, THLL…LVLL, and LLLM…GSGL. In terms of domain architecture, ABC transmembrane type-1 spans 133–420; sequence VAVVLALGAA…LSVLFGQVVR (288 aa). An ABC transporter domain is found at 455 to 692; sequence VTFQNVCFSY…GGLYAELIRR (238 aa). 490-497 provides a ligand contact to ATP; it reads GQSGGGKT. The tract at residues 697 to 718 is disordered; the sequence is APRTAAPLPKKPEGPRNHQHKS.

This sequence belongs to the ABC transporter superfamily. ABCB family. Multidrug resistance exporter (TC 3.A.1.201) subfamily. In terms of assembly, the mitochondrial potassium channel (mitoK(ATP)) is composed of 4 subunits of CCDC51/MITOK and 4 subunits of ABCB8/MITOSUR. Physically interacts with PAAT. Interacts with Neuropilin-1 (NRP1) in mitochondria.

Its subcellular location is the mitochondrion inner membrane. Its activity is regulated as follows. Channel activity inhibited by ATP via ABCB8/MITOSUR subunit. Functionally, ATP-binding subunit of the mitochondrial ATP-gated potassium channel (mitoK(ATP)). Together with pore-forming subunit CCDC51/MITOK of the mitoK(ATP) channel, mediates ATP-dependent potassium currents across the mitochondrial inner membrane. An increase in ATP intracellular levels closes the channel, inhibiting K(+) transport, whereas a decrease in ATP levels enhances K(+) uptake in the mitochondrial matrix. Plays a role in mitochondrial iron transport. Required for maintenance of normal cardiac function, possibly by influencing mitochondrial iron export and regulating the maturation of cytosolic iron sulfur cluster-containing enzymes. The sequence is that of Mitochondrial potassium channel ATP-binding subunit (ABCB8) from Pongo abelii (Sumatran orangutan).